The following is a 306-amino-acid chain: Probable rRNA-processing protein EBP2 (306 aa).

The residue at position 1 (Met1) is an N-acetylmethionine. Disordered stretches follow at residues Met1–Asp20, Gly75–Gln103, and Ile150–Gln169. Thr3 is subject to Phosphothreonine. Phosphoserine occurs at positions 7, 9, 11, and 13. Polar residues predominate over residues Ser81–Gln90. Positions Asp91–Gln103 are enriched in basic and acidic residues. A Glycyl lysine isopeptide (Lys-Gly) (interchain with G-Cter in SUMO2) cross-link involves residue Lys93. Residues Asp135–Arg171 are a coiled coil. Residues Lys179 and Lys218 each participate in a glycyl lysine isopeptide (Lys-Gly) (interchain with G-Cter in SUMO2) cross-link. The segment covering Leu213 to Ala224 has biased composition (basic and acidic residues). The tract at residues Leu213–Arg306 is disordered. Ser264 and Ser270 each carry phosphoserine. Over residues Lys274–Arg306 the composition is skewed to basic residues.

Belongs to the EBP2 family. As to quaternary structure, interacts with WDR46.

It localises to the nucleus. Its subcellular location is the nucleolus. Its function is as follows. Required for the processing of the 27S pre-rRNA. The protein is Probable rRNA-processing protein EBP2 (Ebna1bp2) of Mus musculus (Mouse).